The primary structure comprises 67 residues: Conotoxin ArMLCL-012 (67 aa).

An N-terminal signal peptide occupies residues 1–19 (MLCLPVFIILLLLASPAAS). A propeptide spanning residues 20–45 (NPLEKRIQSDLIRAALEDADTKNDPR) is cleaved from the precursor. Cysteine 64 carries the cysteine amide modification.

Belongs to the conotoxin T superfamily. Post-translationally, contains 2 disulfide bonds that can be either 'C1-C3, C2-C4' or 'C1-C4, C2-C3', since these disulfide connectivities have been observed for conotoxins with cysteine framework V (for examples, see AC P0DQQ7 and AC P81755). As to expression, expressed by the venom duct.

It is found in the secreted. The chain is Conotoxin ArMLCL-012 from Conus arenatus (Sand-dusted cone).